A 318-amino-acid chain; its full sequence is Polyprenal reductase (318 aa).

Over 1 to 11 the chain is Cytoplasmic; it reads MAPWAEAEHSA. Residues 12 to 34 form a helical membrane-spanning segment; sequence LNPLRAVWLTLTAAFLLTLLLQL. Residues 35 to 80 lie on the Lumenal side of the membrane; sequence LPPGLLPGCAIFQDLIRYGKTKCGEPSRPAACRAFDVPKRYFSHFY. The helical transmembrane segment at 81-101 threads the bilayer; that stretch reads IISVLWNGFLLWCLTQSLFLG. At 102–117 the chain is on the cytoplasmic side; sequence APFPSWLHGLLRILGA. The helical transmembrane segment at 118–138 threads the bilayer; it reads AQFQGGELALSAFLVLVFLWL. Residues 139 to 157 lie on the Lumenal side of the membrane; sequence HSLRRLFECLYVSVFSNVM. A helical transmembrane segment spans residues 158-178; that stretch reads IHVVQYCFGLVYYVLVGLTVL. Residues 179–194 lie on the Cytoplasmic side of the membrane; the sequence is SQVPMDGRNAYITGKN. Residues 195-215 form a helical membrane-spanning segment; it reads LLMQARWFHILGMMMFIWSSA. At 216–260 the chain is on the lumenal side; that stretch reads HQYKCHVILGNLRKNKAGVVIHCNHRIPFGDWFEYVSSPNYLAEL. A helical transmembrane segment spans residues 261–281; it reads MIYVSMAVTFGFHNLTWWLVV. At 282-318 the chain is on the cytoplasmic side; sequence TNVFFNQALSAFLSHQFYKSKFVSYPKHRKAFLPFLF.

This sequence belongs to the steroid 5-alpha reductase family. Polyprenal reductase subfamily. Expressed in preadipocytes (at protein level). Overexpressed in hormone-refractory prostate cancers (HRPC). Almost no or little expression in normal adult organs.

The protein localises to the endoplasmic reticulum membrane. The catalysed reaction is a di-trans,poly-cis-dolichal + NADP(+) = a di-trans,poly-cis-polyprenal + NADPH + H(+). It catalyses the reaction a 3-oxo-5alpha-steroid + NADP(+) = a 3-oxo-Delta(4)-steroid + NADPH + H(+). The enzyme catalyses androst-4-ene-3,17-dione + NADPH + H(+) = 5alpha-androstan-3,17-dione + NADP(+). It carries out the reaction 17beta-hydroxy-5alpha-androstan-3-one + NADP(+) = testosterone + NADPH + H(+). It participates in protein modification; protein glycosylation. In terms of biological role, plays a key role in early steps of protein N-linked glycosylation by being involved in the conversion of polyprenol into dolichol. Acts as a polyprenal reductase that mediates the reduction of polyprenal into dolichal in a NADP-dependent mechanism. Dolichols are required for the synthesis of dolichol-linked monosaccharides and the oligosaccharide precursor used for N-glycosylation. Also able to convert testosterone (T) into 5-alpha-dihydrotestosterone (DHT). This Homo sapiens (Human) protein is Polyprenal reductase.